A 256-amino-acid chain; its full sequence is NAD-dependent protein deacetylase (256 aa).

Residues Met1–Glu254 form the Deacetylase sirtuin-type domain. The NAD(+) site is built by Ala28, Thr32, Phe39, Arg40, Gln105, Ile107, Asp108, and His123. A nicotinamide-binding site is contributed by Phe39. The nicotinamide site is built by Ile107 and Asp108. Residue His123 is the Proton acceptor of the active site. The Zn(2+) site is built by Cys131, Cys134, Cys156, and Cys159. Residues Thr197, Ser198, and Asn222 each coordinate NAD(+).

This sequence belongs to the sirtuin family. Class U subfamily. It depends on Zn(2+) as a cofactor.

The protein localises to the cytoplasm. The enzyme catalyses N(6)-acetyl-L-lysyl-[protein] + NAD(+) + H2O = 2''-O-acetyl-ADP-D-ribose + nicotinamide + L-lysyl-[protein]. In terms of biological role, NAD-dependent protein deacetylase which modulates the activities of several enzymes which are inactive in their acetylated form. This chain is NAD-dependent protein deacetylase, found in Thermodesulfovibrio yellowstonii (strain ATCC 51303 / DSM 11347 / YP87).